The following is a 161-amino-acid chain: SsrA-binding protein (161 aa).

It belongs to the SmpB family.

The protein resides in the cytoplasm. Functionally, required for rescue of stalled ribosomes mediated by trans-translation. Binds to transfer-messenger RNA (tmRNA), required for stable association of tmRNA with ribosomes. tmRNA and SmpB together mimic tRNA shape, replacing the anticodon stem-loop with SmpB. tmRNA is encoded by the ssrA gene; the 2 termini fold to resemble tRNA(Ala) and it encodes a 'tag peptide', a short internal open reading frame. During trans-translation Ala-aminoacylated tmRNA acts like a tRNA, entering the A-site of stalled ribosomes, displacing the stalled mRNA. The ribosome then switches to translate the ORF on the tmRNA; the nascent peptide is terminated with the 'tag peptide' encoded by the tmRNA and targeted for degradation. The ribosome is freed to recommence translation, which seems to be the essential function of trans-translation. This Haemophilus influenzae (strain 86-028NP) protein is SsrA-binding protein.